The chain runs to 347 residues: Peptidoglycan recognition protein 3 (347 aa).

A signal peptide spans 1–26; the sequence is MLVSWDHPKMLPRLLGFLALSLLACG. 2 N-acetylmuramoyl-L-alanine amidase domains span residues 77 to 185 and 206 to 328; these read LQSQ…KACP and PAKF…VSNI. N120 carries N-linked (GlcNAc...) asparagine glycosylation. Intrachain disulfides connect C184/C306, C200/C244, and C220/C226. The peptidoglycan site is built by H237 and Y248. An interaction with murein region spans residues 270 to 275; it reads HTYGYN.

It belongs to the N-acetylmuramoyl-L-alanine amidase 2 family. Monomer. Homodimer; disulfide-linked. Heterodimer with PGLYRP4; disulfide-linked. As to expression, detected in lung, spleen and stomach, and at low levels in eye, heart, thymus and testis.

It localises to the secreted. Functionally, pattern receptor that binds to murein peptidoglycans (PGN) of Gram-positive bacteria. Has bactericidal activity towards Gram-positive bacteria. May kill Gram-positive bacteria by interfering with peptidoglycan biosynthesis. Also binds to Gram-negative bacteria, and has bacteriostatic activity towards Gram-negative bacteria. Plays a role in innate immunity. In Mus musculus (Mouse), this protein is Peptidoglycan recognition protein 3 (Pglyrp3).